A 181-amino-acid polypeptide reads, in one-letter code: Translation initiation factor IF-3 (181 aa).

This sequence belongs to the IF-3 family. Monomer.

It localises to the cytoplasm. Its function is as follows. IF-3 binds to the 30S ribosomal subunit and shifts the equilibrium between 70S ribosomes and their 50S and 30S subunits in favor of the free subunits, thus enhancing the availability of 30S subunits on which protein synthesis initiation begins. This Cereibacter sphaeroides (strain ATCC 17023 / DSM 158 / JCM 6121 / CCUG 31486 / LMG 2827 / NBRC 12203 / NCIMB 8253 / ATH 2.4.1.) (Rhodobacter sphaeroides) protein is Translation initiation factor IF-3.